A 280-amino-acid polypeptide reads, in one-letter code: DegV domain-containing protein Mb2440c (280 aa).

The 272-residue stretch at 3–274 (VVVVTDTSCR…AGAVGVCVDV (272 aa)) folds into the DegV domain. Hexadecanoate is bound at residue Ser-89.

Its function is as follows. May bind long-chain fatty acids, such as palmitate, and may play a role in lipid transport or fatty acid metabolism. This Mycobacterium bovis (strain ATCC BAA-935 / AF2122/97) protein is DegV domain-containing protein Mb2440c.